The following is a 459-amino-acid chain: MPIPRLMCTQHPDTTVKITAAEEVDEAIVAFTAYGCDEVMVDYEGKATPYSQPKEVVMKAAKSELPLGEKFVITVRLPNPRLEEFDRAMLALEAAVVANYFSVKYMGVRAVKWVVLPMVEDVETMSLVRRMLKRKVEDYKAEAKVDVGNIEVIPLFEDAFVQLKAKALLGEVFKGEEVREVRLFLGKSDSAVKHGHLASALAIAYTLSRLGDVESELGLRIRPILGMGSPPFRGGLNNPRLAPMEVVQYAGYYTATIQSAVRYDVALEEFLKVREAILNGCCAPRQRAPDEVLHIVQEASARYRALVMKYADKVIEVARLVPSTRDRVSWTAYGRTLTGGERVVNMPRAIVYTSAWYATGLPPTLLDAPYLLELAKSDKLDLVLKVLPTYLKELEYDLEFFDRATAEKYLDGEIVKAVVELADYLGLEARPNPAYATLLRMPRNEANIIALGKYRKFLG.

Belongs to the PEPCase type 2 family. In terms of assembly, homotetramer. Mg(2+) is required as a cofactor.

The enzyme catalyses oxaloacetate + phosphate = phosphoenolpyruvate + hydrogencarbonate. In terms of biological role, catalyzes the irreversible beta-carboxylation of phosphoenolpyruvate (PEP) to form oxaloacetate (OAA), a four-carbon dicarboxylic acid source for the tricarboxylic acid cycle. This chain is Phosphoenolpyruvate carboxylase, found in Pyrobaculum calidifontis (strain DSM 21063 / JCM 11548 / VA1).